The primary structure comprises 80 residues: uncharacterized protein (80 aa).

Helical transmembrane passes span 2 to 22 (INLW…IGQV), 32 to 52 (FFGM…LTGG), and 55 to 75 (LVTG…RFMV).

It localises to the cell membrane. This is an uncharacterized protein from Escherichia coli (strain K12).